Consider the following 73-residue polypeptide: UPF0352 protein HD_1515 (73 aa).

Belongs to the UPF0352 family.

The polypeptide is UPF0352 protein HD_1515 (Haemophilus ducreyi (strain 35000HP / ATCC 700724)).